We begin with the raw amino-acid sequence, 94 residues long: FXYD domain-containing ion transport regulator 6 (94 aa).

An N-terminal signal peptide occupies residues 1-17 (METVLILCSLLAPVVLA). The Extracellular portion of the chain corresponds to 18 to 34 (SAAEKEKEKDPFYYDYQ). The chain crosses the membrane as a helical span at residues 35–57 (TLRIGGLVFAVVLFSVGILLILS). The Cytoplasmic segment spans residues 58 to 94 (RRCKCSFNQKPRAPGDEEAQVENLITTNAAEPQKAEN).

It belongs to the FXYD family. As to quaternary structure, regulatory subunit of the sodium/potassium-transporting ATPase which is composed of a catalytic alpha subunit, a non-catalytic beta subunit and an additional regulatory subunit. The regulatory subunit, a member of the FXYD protein family, modulates the enzymatic activity in a tissue- and isoform-specific way by changing affinities of the Na+/K+-ATPase toward Na(+), K(+) or ATP. As to expression, expressed in the neuronal fibers of the medial part of lateral habenula nucleus, thalamus, hypothalamus, stria terminalis, zona incerta, amygdaloid body and cingulum, olfactory bulb, hippocampus, cerebral cortex and cerebellum. In the cerebellum there is a predominant expression pattern in the granule layer of lobules VI-IX of the posterior lobe. Detected in inner ear.

It localises to the cell membrane. Functionally, associates with and regulates the activity of the sodium/potassium-transporting ATPase (NKA) which catalyzes the hydrolysis of ATP coupled with the exchange of Na(+) and K(+) ions across the plasma membrane. Decreases the apparent affinity of the transporter for Na(+). In addition to modulating NKA kinetics, may also function as a regulator of NKA localization to the plasma membrane. This Rattus norvegicus (Rat) protein is FXYD domain-containing ion transport regulator 6 (Fxyd6).